The primary structure comprises 165 residues: MNISNINNDIYLGGLGNHSTEEIKNFLIDNNIKCIITIWNFNKLNIKKLNINVKDYMYIHAYDLTNEIIIDYFDITNKFIINKIKEGKKVLIHCYAGISRSASIVINYFMNKYNINYDEAEKIVSKKRNIKPNIFFILQLKFYNSYKNINIIYLIILFAIRYTLK.

One can recognise a Tyrosine-protein phosphatase domain in the interval 2–149; sequence NISNINNDIY…LKFYNSYKNI (148 aa). Catalysis depends on C94, which acts as the Phosphocysteine intermediate.

Belongs to the protein-tyrosine phosphatase family. Non-receptor class dual specificity subfamily.

The catalysed reaction is O-phospho-L-tyrosyl-[protein] + H2O = L-tyrosyl-[protein] + phosphate. This is Putative tyrosine-protein phosphatase AMV078 from Amsacta moorei entomopoxvirus (AmEPV).